The sequence spans 238 residues: Cysteine-rich venom protein pseudecin (238 aa).

A signal peptide spans methionine 1 to glycine 19. Residues threonine 20–serine 28 constitute a propeptide that is removed on maturation. An SCP domain is found at valine 38–tyrosine 164. Zn(2+) is bound by residues threonine 51 and serine 106. 8 disulfide bridges follow: cysteine 75/cysteine 153, cysteine 92/cysteine 165, cysteine 148/cysteine 162, cysteine 184/cysteine 191, cysteine 187/cysteine 196, cysteine 200/cysteine 233, cysteine 209/cysteine 227, and cysteine 218/cysteine 231. The region spanning cysteine 200 to cysteine 233 is the ShKT domain.

As to expression, expressed by the venom gland.

It localises to the secreted. Functionally, blocks olfactory (CNGA2) and retinal (CNGA1) CNG channel currents. Is really less potent that Pseudechetoxin. Does not affect neither depolarization- nor caffeine-induced contraction of smooth muscle. This Pseudechis porphyriacus (Red-bellied black snake) protein is Cysteine-rich venom protein pseudecin.